We begin with the raw amino-acid sequence, 314 residues long: Malate dehydrogenase (314 aa).

NAD(+) is bound by residues 12–17 (GAGNIG) and aspartate 36. Substrate contacts are provided by arginine 85 and arginine 91. NAD(+) contacts are provided by residues asparagine 98 and 121–123 (VTN). Residues asparagine 123 and arginine 154 each coordinate substrate. The Proton acceptor role is filled by histidine 178.

The protein belongs to the LDH/MDH superfamily. MDH type 3 family.

It catalyses the reaction (S)-malate + NAD(+) = oxaloacetate + NADH + H(+). Its function is as follows. Catalyzes the reversible oxidation of malate to oxaloacetate. This is Malate dehydrogenase from Wolbachia pipientis subsp. Culex pipiens (strain wPip).